The sequence spans 1134 residues: Ovochymase-1 (1134 aa).

A signal peptide spans 1-22 (MGLLASAGLLLLLVIGHPRSLG). Residues 23-46 (LKCGIRMVNMKSKEPAVGSRFFSR) constitute a propeptide, activation peptide. The region spanning 38 to 296 (AVGSRFFSRI…LMDFITQNLF (259 aa)) is the Peptidase S1 1 domain. Residue Asn52 is glycosylated (N-linked (GlcNAc...) asparagine). Cysteines 72 and 88 form a disulfide. His87 acts as the Charge relay system in catalysis. The N-linked (GlcNAc...) asparagine glycan is linked to Asn99. Position 116 (Glu116) interacts with Ca(2+). Asp139 (charge relay system) is an active-site residue. Disulfide bonds link Cys173/Cys243, Cys204/Cys222, and Cys233/Cys262. Ser237 acts as the Charge relay system in catalysis. 2 CUB domains span residues 284-410 (VSEL…VTAV) and 419-531 (CGSL…FTIL). An N-linked (GlcNAc...) asparagine glycan is attached at Asn324. 3 disulfides stabilise this stretch: Cys341–Cys373, Cys419–Cys446, and Cys473–Cys494. Asn431 carries an N-linked (GlcNAc...) asparagine glycan. The N-linked (GlcNAc...) asparagine glycan is linked to Asn507. Residues 575-812 (IAGGEEACPH…FLDWIQSKIN (238 aa)) form the Peptidase S1 2 domain. The cysteines at positions 600 and 616 are disulfide-linked. Active-site charge relay system residues include His615 and Asp664. Cystine bridges form between Cys698-Cys769, Cys729-Cys747, Cys759-Cys788, and Cys846-Cys873. The active-site Charge relay system is the Ser763. The CUB 3 domain maps to 846-957 (CSEAELEKPR…GAFGISYIVL (112 aa)). N-linked (GlcNAc...) asparagine glycosylation occurs at Asn1106.

Belongs to the peptidase S1 family.

The protein resides in the secreted. The chain is Ovochymase-1 (OVCH1) from Homo sapiens (Human).